Here is a 172-residue protein sequence, read N- to C-terminus: uncharacterized protein (172 aa).

4 helical membrane passes run 20–40, 48–68, 76–96, and 146–166; these read LVLI…EYIF, CVYE…ALII, LILI…HSFV, and MTEY…LILF.

It localises to the cell membrane. This is an uncharacterized protein from Rickettsia prowazekii (strain Madrid E).